The chain runs to 163 residues: Small ribosomal subunit protein bS18c (163 aa).

Disordered regions lie at residues 1–54 and 121–163; these read MYTS…PGDR and ITGP…SSDC. A compositionally biased stretch (basic residues) spans 7 to 48; sequence PFHKSKQTFHKSKQTFRKSKQTFRKFKQPFRKPKQPFRRRPR. Positions 140 to 163 are enriched in low complexity; that stretch reads NSNRNLRNSNQTLRNNNRNLSSDC.

The protein belongs to the bacterial ribosomal protein bS18 family. In terms of assembly, part of the 30S ribosomal subunit.

The protein resides in the plastid. It is found in the chloroplast. This chain is Small ribosomal subunit protein bS18c, found in Oryza nivara (Indian wild rice).